Consider the following 379-residue polypeptide: MNQTIVIKIGTSSLTDNETGQLSLSTIAALVEVLTRLRAAGHRVVLVSSGAVGVGCRRLGIQERPKKIALKQAIAAVGQGRLMRIYDDLFTSLGQPIAQILLTRPELMERTCYVNAYNTFQALFELGVIAIVNENDTVAIDELKFGDNDTLSALVASLIEADWLFILTDVDRLYSADPRLFPEAAAIARVSPAELAQLSIDAGSSGSQWGTGGMATKLAAARIATSAGVEMAITRGRQPGNILKIMAGEAIGTRFEAQKRSDNARKRWIAYGLLPMGKIYLDAGAIQAICQGGKSLLAAGITKVEGEFSASESVQLCDQEGRELARGIVNYSSEEIDRVKGQHSERIASLLGYMAAETIIHRDNLVILSASSTTSTNKG.

Lys-8 contacts ATP. Residues Ser-49, Asp-136, and Asn-148 each contribute to the substrate site. ATP contacts are provided by residues 168–169 (TD) and 211–217 (TGGMATK). The 79-residue stretch at 276-354 (MGKIYLDAGA…ERIASLLGYM (79 aa)) folds into the PUA domain.

Belongs to the glutamate 5-kinase family.

Its subcellular location is the cytoplasm. It catalyses the reaction L-glutamate + ATP = L-glutamyl 5-phosphate + ADP. It functions in the pathway amino-acid biosynthesis; L-proline biosynthesis; L-glutamate 5-semialdehyde from L-glutamate: step 1/2. Catalyzes the transfer of a phosphate group to glutamate to form L-glutamate 5-phosphate. This chain is Glutamate 5-kinase, found in Microcystis aeruginosa (strain NIES-843 / IAM M-2473).